We begin with the raw amino-acid sequence, 403 residues long: Argininosuccinate synthase (403 aa).

Residue 9–17 participates in ATP binding; the sequence is AYSGGLDTS. Tyrosine 86 lines the L-citrulline pocket. Position 116 (glycine 116) interacts with ATP. Threonine 118, asparagine 122, and aspartate 123 together coordinate L-aspartate. Residue asparagine 122 participates in L-citrulline binding. L-citrulline-binding residues include arginine 126, serine 174, serine 183, glutamate 259, and tyrosine 271.

It belongs to the argininosuccinate synthase family. Type 1 subfamily. Homotetramer.

It is found in the cytoplasm. It catalyses the reaction L-citrulline + L-aspartate + ATP = 2-(N(omega)-L-arginino)succinate + AMP + diphosphate + H(+). The protein operates within amino-acid biosynthesis; L-arginine biosynthesis; L-arginine from L-ornithine and carbamoyl phosphate: step 2/3. This Shouchella clausii (strain KSM-K16) (Alkalihalobacillus clausii) protein is Argininosuccinate synthase.